A 360-amino-acid polypeptide reads, in one-letter code: Alpha-2-HS-glycoprotein (360 aa).

A signal peptide spans 1 to 15 (LVLLLSLAQLWSCHL). The 107-residue stretch at 24-130 (YREHNCDDPE…QFTVLSAKCD (107 aa)) folds into the Cystatin fetuin-A-type 1 domain. Intrachain disulfides connect Cys29-Cys351, Cys86-Cys97, Cys111-Cys129, Cys143-Cys146, Cys205-Cys216, and Cys227-Cys244. Asn96 is a glycosylation site (N-linked (GlcNAc...) asparagine). Ser131 is modified (phosphoserine). Thr132 is modified (phosphothreonine). Ser135 is subject to Phosphoserine. Residues 141–252 (KLCPDCPLLT…TCTIFPAQPV (112 aa)) enclose the Cystatin fetuin-A-type 2 domain. Residue Asn153 is glycosylated (N-linked (GlcNAc...) asparagine). Positions 260-285 (VAGAAAVEPAPAVDPASPVSPPDGQS) are disordered. A Phosphothreonine modification is found at Thr312. Ser318, Ser321, and Ser323 each carry phosphoserine.

It belongs to the fetuin family. Phosphorylated by FAM20C in the extracellular medium. In terms of tissue distribution, bone marrow.

It is found in the secreted. Functionally, a cell adhesion protein that binds immature cells of the granulocyte lineage. This is Alpha-2-HS-glycoprotein (AHSG) from Oryctolagus cuniculus (Rabbit).